The chain runs to 114 residues: UPF0342 protein PEPE_0673 (114 aa).

It belongs to the UPF0342 family.

In Pediococcus pentosaceus (strain ATCC 25745 / CCUG 21536 / LMG 10740 / 183-1w), this protein is UPF0342 protein PEPE_0673.